Consider the following 407-residue polypeptide: Na(+)-translocating NADH-quinone reductase subunit F (407 aa).

Residues 3–23 (IILGVVMFTLIVLALTVMILF) traverse the membrane as a helical segment. One can recognise a 2Fe-2S ferredoxin-type domain in the interval 32–126 (GDITIDINED…NLKIELPEEI (95 aa)). Positions 69, 75, 78, and 110 each coordinate [2Fe-2S] cluster. Residues 129–269 (VKKWECEVIS…SGPFGEFFAK (141 aa)) enclose the FAD-binding FR-type domain.

It belongs to the NqrF family. As to quaternary structure, composed of six subunits; NqrA, NqrB, NqrC, NqrD, NqrE and NqrF. The cofactor is [2Fe-2S] cluster. FAD serves as cofactor.

The protein resides in the cell inner membrane. It catalyses the reaction a ubiquinone + n Na(+)(in) + NADH + H(+) = a ubiquinol + n Na(+)(out) + NAD(+). NQR complex catalyzes the reduction of ubiquinone-1 to ubiquinol by two successive reactions, coupled with the transport of Na(+) ions from the cytoplasm to the periplasm. The first step is catalyzed by NqrF, which accepts electrons from NADH and reduces ubiquinone-1 to ubisemiquinone by a one-electron transfer pathway. This Yersinia enterocolitica serotype O:8 / biotype 1B (strain NCTC 13174 / 8081) protein is Na(+)-translocating NADH-quinone reductase subunit F.